The following is a 202-amino-acid chain: Putative chromophore lyase CpcV (202 aa).

It belongs to the CpcS/CpeS biliprotein lyase family.

Functionally, covalently attaches a chromophore to Cys residue(s) of phycobiliproteins. The chain is Putative chromophore lyase CpcV (cpcV) from Picosynechococcus sp. (strain ATCC 27264 / PCC 7002 / PR-6) (Agmenellum quadruplicatum).